The chain runs to 490 residues: Coagulation factor X (490 aa).

Residues 1 to 20 form the signal peptide; sequence MANPLHLVLLGAALAGLLLS. Positions 21 to 40 are excised as a propeptide; that stretch reads GSSVFISRRAANDVLARTRR. Residues 41 to 85 form the Gla domain; the sequence is ANSFLEELKKGNLERECMEENCSYEEALEVFEDREKTNEFWNKYV. Residues Glu46, Glu47, Glu54, Glu56, Glu59, and Glu60 each carry the 4-carboxyglutamate modification. An intrachain disulfide couples Cys57 to Cys62. Residue Asn61 is glycosylated (N-linked (GlcNAc...) asparagine). 6 positions are modified to 4-carboxyglutamate: Glu65, Glu66, Glu69, Glu72, Glu75, and Glu79. An EGF-like 1; calcium-binding domain is found at 86-122; the sequence is DGDQCESNPCQNQGTCKDGLGMYTCSCVEGYEGQDCE. 11 disulfide bridges follow: Cys90–Cys101, Cys95–Cys110, Cys112–Cys121, Cys129–Cys140, Cys136–Cys149, Cys151–Cys164, Cys172–Cys340, Cys239–Cys244, Cys259–Cys275, Cys388–Cys402, and Cys413–Cys441. Asp103 carries the (3R)-3-hydroxyaspartate modification. Residues 125–165 form the EGF-like 2 domain; the sequence is TRKLCSLDNGGCDQFCKEEENSVLCSCASGYTLGDNGKSCI. Residues 183–230 are disordered; the sequence is SPATNSSEGPPEAPGPEQQDDGNLTATENPFNLLDSPEPPPEDDSSSL. Residues 184-232 constitute a propeptide, activation peptide; it reads PATNSSEGPPEAPGPEQQDDGNLTATENPFNLLDSPEPPPEDDSSSLVR. 2 N-linked (GlcNAc...) asparagine glycosylation sites follow: Asn187 and Asn205. Over residues 203-212 the composition is skewed to polar residues; sequence DGNLTATENP. Positions 233–465 constitute a Peptidase S1 domain; sequence IVGGQDCRDG…FLKWIEKSMR (233 aa). Residues His274 and Asp320 each act as charge relay system in the active site. The active-site Charge relay system is Ser417.

It belongs to the peptidase S1 family. In terms of assembly, the two chains are formed from a single-chain precursor by the excision of two Arg residues and are held together by 1 or more disulfide bonds. Forms a heterodimer with SERPINA5. The vitamin K-dependent, enzymatic carboxylation of some glutamate residues allows the modified protein to bind calcium. Post-translationally, N- and O-glycosylated. In terms of processing, proteolytically cleaved and activated by cathepsin CTSG. The activation peptide is cleaved by factor IXa (in the intrinsic pathway), or by factor VIIa (in the extrinsic pathway). The iron and 2-oxoglutarate dependent 3-hydroxylation of aspartate and asparagine is (R) stereospecific within EGF domains.

The protein resides in the secreted. It catalyses the reaction Selective cleavage of Arg-|-Thr and then Arg-|-Ile bonds in prothrombin to form thrombin.. Its activity is regulated as follows. Inhibited by SERPINA5. In terms of biological role, factor Xa is a vitamin K-dependent glycoprotein that converts prothrombin to thrombin in the presence of factor Va, calcium and phospholipid during blood clotting. Factor Xa activates pro-inflammatory signaling pathways in a protease-activated receptor (PAR)-dependent manner. This is Coagulation factor X (F10) from Oryctolagus cuniculus (Rabbit).